Here is a 592-residue protein sequence, read N- to C-terminus: Transmembrane 9 superfamily member 2 (592 aa).

An N-terminal signal peptide occupies residues 1-24 (MRTPTTILLLVGAILFSGAGYVRS). The Lumenal portion of the chain corresponds to 25–229 (DASDHRYKEG…SLPHHLEIHW (205 aa)). The chain crosses the membrane as a helical span at residues 230–250 (FSIINSCVTVLLLTGFLATIL). Residues 251-302 (MRVLKNDFMKYAQDEEAADDQEETGWKYIHGDVFRFPTHNSLFAASLGSGTQ) lie on the Cytoplasmic side of the membrane. Residues 303 to 323 (LFTLTIFIFMLALVGVFYPYN) traverse the membrane as a helical segment. A topological domain (lumenal) is located at residue arginine 324. A helical membrane pass occupies residues 325–345 (GALFTALVVIYALTSGIAGYT). At 346 to 362 (SASFYCQLEGKSWVRNL) the chain is on the cytoplasmic side. Residues 363 to 383 (LLTGCLFCGPLFLTFCFLNTV) traverse the membrane as a helical segment. The Lumenal segment spans residues 384-397 (AITYTATAALPFGT). The chain crosses the membrane as a helical span at residues 398 to 418 (IVVIVLIWTLVTSPLLVLGGI). The Cytoplasmic segment spans residues 419–452 (AGKNSKAEFQAPCRTTKYPREIPPLPWYRSAIPQ). A helical membrane pass occupies residues 453-473 (MAMAGFLPFSAIYIELYYIFA). Residues 474–485 (SVWGHRIYTIYS) are Lumenal-facing. A helical transmembrane segment spans residues 486–506 (ILFIVFIILIIVTAFITVALT). Over 507-521 (YFQLAAEDHQWWWRS) the chain is Cytoplasmic. A helical transmembrane segment spans residues 522–542 (FLCGGSTGLFIYAYCLYYYYA). The Lumenal segment spans residues 543-553 (RSDMSGFMQTS). A helical transmembrane segment spans residues 554–574 (FFFGYMACICYGFFLMLGTVG). The Cytoplasmic portion of the chain corresponds to 575-592 (FRAALLFVRHIYRSIKCE). The Endoplasmic reticulum export signal motif lies at 581–586 (FVRHIY). The Golgi retention signal signature appears at 590 to 592 (KCE).

Belongs to the nonaspanin (TM9SF) (TC 9.A.2) family.

The protein localises to the endosome membrane. It localises to the golgi apparatus membrane. This Arabidopsis thaliana (Mouse-ear cress) protein is Transmembrane 9 superfamily member 2.